The chain runs to 356 residues: Tyrosinase P (356 aa).

The N-terminal stretch at 1–19 is a signal peptide; sequence MGFYRNLVLVAASCTQALG. An N-linked (GlcNAc...) asparagine glycan is attached at Asn81. Positions 87 and 96 each coordinate Cu cation. N-linked (GlcNAc...) asparagine glycosylation is found at Asn148 and Asn193. Residue His203 coordinates Cu cation. An N-linked (GlcNAc...) asparagine glycan is attached at Asn226. His263 and His286 together coordinate Cu cation. Asn309 carries N-linked (GlcNAc...) asparagine glycosylation.

Belongs to the tyrosinase family. Requires Cu(2+) as cofactor. Glycosylated.

Its subcellular location is the endoplasmic reticulum lumen. It localises to the golgi apparatus lumen. It catalyses the reaction aspulvinone E + O2 = (5Z)-3-(3,4-dihydroxyphenyl)-5-[(3,4-dihydroxyphenyl)methylidene]-5-oxo-2,5-dihydrofuran-3-olate. It carries out the reaction aspulvinone E + O2 = (2Z)-2-[(3,4-dioxocyclohexa-1,5-dien-1-yl)methylidene]-4-(4-hydroxyphenyl)-5-oxo-2,5-dihydrofuran-3-olate + H2O. Activity is inhibited by the presence of dithiothreitol (DTT). Functionally, tyrosinase; part of the gene cluster that mediates the biosynthesis of Asp-melanin, a pigment that confers resistance against UV light and hampers phagocytosis by soil amoeba. The nonribosomal peptide synthase melA converts 4-hydroxyphenylpyruvate (4-HPPA) to aspulvinone E. The tyrosinase tyrP then performs hydroxylations of both aromatic moieties of aspulvinone E. The product of tyrP is highly unstable, and, due to the high reactivity of methides and ortho-diquinones, the polymeric Asp-melanin forms spontaneously. The chain is Tyrosinase P (tyrP) from Aspergillus terreus.